The sequence spans 711 residues: Double-stranded RNA-specific editase 1 (711 aa).

The disordered stretch occupies residues Met-1 to Leu-78. Positions Ser-63 to Thr-73 are enriched in basic residues. The DRBM 1 domain maps to Leu-78–Gln-144. Interaction with substrate RNA stretches follow at residues Leu-83–Glu-88 and Val-104–His-105. Ser-149 is subject to Phosphoserine. The tract at residues Leu-176 to Pro-220 is disordered. Residues Val-192 to Val-213 are compositionally biased toward low complexity. Residues Pro-231–Asn-298 form the DRBM 2 domain. 2 interaction with substrate RNA regions span residues Val-237–Glu-242 and His-259. One can recognise an A to I editase domain in the interval Ser-370 to Phe-707. Zn(2+) is bound at residue His-394. Glu-396 (proton donor) is an active-site residue. 1D-myo-inositol hexakisphosphate is bound by residues Arg-400 and Arg-401. The Zn(2+) site is built by Cys-451 and Cys-526. 1D-myo-inositol hexakisphosphate-binding residues include Lys-529, Arg-532, Lys-639, Lys-672, Lys-682, and Lys-700.

As to quaternary structure, homodimer. Homodimerization is essential for its catalytic activity. Can form heterodimers with isoform 5 of ADAR/ADAR1. Requires 1D-myo-inositol hexakisphosphate as cofactor.

The protein resides in the nucleus. It localises to the nucleolus. It carries out the reaction adenosine in double-stranded RNA + H2O + H(+) = inosine in double-stranded RNA + NH4(+). Catalyzes the hydrolytic deamination of adenosine to inosine in double-stranded RNA (dsRNA) referred to as A-to-I RNA editing. This may affect gene expression and function in a number of ways that include mRNA translation by changing codons and hence the amino acid sequence of proteins; pre-mRNA splicing by altering splice site recognition sequences; RNA stability by changing sequences involved in nuclease recognition; genetic stability in the case of RNA virus genomes by changing sequences during viral RNA replication; and RNA structure-dependent activities such as microRNA production or targeting or protein-RNA interactions. Can edit both viral and cellular RNAs and can edit RNAs at multiple sites (hyper-editing) or at specific sites (site-specific editing). Its cellular RNA substrates include: bladder cancer-associated protein (BLCAP), neurotransmitter receptors for glutamate (GRIA2 and GRIK2) and serotonin (HTR2C), GABA receptor (GABRA3) and potassium voltage-gated channel (KCNA1). Site-specific RNA editing of transcripts encoding these proteins results in amino acid substitutions which consequently alter their functional activities. Edits GRIA2 at both the Q/R and R/G sites efficiently but converts the adenosine in hotspot1 much less efficiently. Can inhibit cell proliferation and migration and can stimulate exocytosis. The polypeptide is Double-stranded RNA-specific editase 1 (Adarb1) (Mus musculus (Mouse)).